Reading from the N-terminus, the 274-residue chain is Bis(5'-nucleosyl)-tetraphosphatase, symmetrical (274 aa).

Belongs to the Ap4A hydrolase family.

It catalyses the reaction P(1),P(4)-bis(5'-adenosyl) tetraphosphate + H2O = 2 ADP + 2 H(+). Functionally, hydrolyzes diadenosine 5',5'''-P1,P4-tetraphosphate to yield ADP. The chain is Bis(5'-nucleosyl)-tetraphosphatase, symmetrical from Shewanella putrefaciens (strain CN-32 / ATCC BAA-453).